A 126-amino-acid polypeptide reads, in one-letter code: Methylglyoxal synthase (126 aa).

One can recognise an MGS-like domain in the interval 1-126 (MAERQKIALI…ADRLLPVITE (126 aa)). Residues His12, Lys16, 38-41 (TGTT), and 59-60 (SG) contribute to the substrate site. Asp65 serves as the catalytic Proton donor/acceptor. Residue His92 participates in substrate binding.

This sequence belongs to the methylglyoxal synthase family.

The catalysed reaction is dihydroxyacetone phosphate = methylglyoxal + phosphate. Functionally, catalyzes the formation of methylglyoxal from dihydroxyacetone phosphate. The chain is Methylglyoxal synthase from Allorhizobium ampelinum (strain ATCC BAA-846 / DSM 112012 / S4) (Agrobacterium vitis (strain S4)).